We begin with the raw amino-acid sequence, 452 residues long: Putrescine hydroxycinnamoyltransferase (452 aa).

The active-site Proton acceptor is H151. The interval 213–234 is disordered; the sequence is PAAGVDGDVGGDHKQQHGHGGE. Positions 222 to 234 are enriched in basic and acidic residues; it reads GGDHKQQHGHGGE. Catalysis depends on D398, which acts as the Proton acceptor.

It belongs to the plant acyltransferase family. Highly expressed in roots. Expressed at low levels in flowers.

Functionally, hydroxycinnamoyl transferase that catalyzes the transfer of an acyl from p-coumaryol-CoA to putrescine, to produce coumaroyl putrescine. Can use feruloyl-CoA, caffeoyl-CoA and sinapoyl-CoA as acyl donors. Seems to be able to transfer the acyl group from feruloyl-CoA to the acyl acceptors agmatine and spermidine. The sequence is that of Putrescine hydroxycinnamoyltransferase from Oryza sativa subsp. japonica (Rice).